The chain runs to 320 residues: Cyclin-D6-1 (320 aa).

The segment at 279–320 is disordered; it reads HHRSASSESERTTTVGSAANSADAKRRCMGPPRQWGVGGPDE.

Belongs to the cyclin family. Cyclin D subfamily.

This is Cyclin-D6-1 (CYCD6-1) from Oryza sativa subsp. japonica (Rice).